The sequence spans 160 residues: Non-secretory ribonuclease (160 aa).

The first 27 residues, 1-27, serve as a signal peptide directing secretion; it reads MVPKLFTSPICLLLLLGLMGVEGSLHA. C-linked (Man) tryptophan glycosylation occurs at Trp34. His42 acts as the Proton acceptor in catalysis. Asn44 carries N-linked (GlcNAc...) asparagine glycosylation. 4 disulfide bridges follow: Cys50/Cys110, Cys64/Cys122, Cys82/Cys137, and Cys89/Cys98. Tyr60 is modified (3'-nitrotyrosine). 65 to 69 serves as a coordination point for substrate; that stretch reads KNQNT. N-linked (GlcNAc...) asparagine glycosylation is found at Asn92, Asn111, Asn118, and Asn138. The active-site Proton donor is the His155.

This sequence belongs to the pancreatic ribonuclease family. Interacts with and forms a tight 1:1 complex with RNH1. Dimerization of two such complexes may occur.

It localises to the lysosome. The protein resides in the cytoplasmic granule. The enzyme catalyses an [RNA] containing cytidine + H2O = an [RNA]-3'-cytidine-3'-phosphate + a 5'-hydroxy-ribonucleotide-3'-[RNA].. It carries out the reaction an [RNA] containing uridine + H2O = an [RNA]-3'-uridine-3'-phosphate + a 5'-hydroxy-ribonucleotide-3'-[RNA].. Functionally, this is a non-secretory ribonuclease. It is a pyrimidine specific nuclease with a slight preference for U. Cytotoxin and helminthotoxin. Possesses a wide variety of biological activities. The chain is Non-secretory ribonuclease (RNASE2) from Chlorocebus aethiops (Green monkey).